Here is a 155-residue protein sequence, read N- to C-terminus: Small ribosomal subunit protein uS7cz/uS7cy (155 aa).

This sequence belongs to the universal ribosomal protein uS7 family. As to quaternary structure, part of the 30S ribosomal subunit.

The protein resides in the plastid. Its function is as follows. One of the primary rRNA binding proteins, it binds directly to 16S rRNA where it nucleates assembly of the head domain of the 30S subunit. The sequence is that of Small ribosomal subunit protein uS7cz/uS7cy (rps7-A) from Cuscuta exaltata (Tall dodder).